Consider the following 470-residue polypeptide: Histidine--tRNA ligase (470 aa).

The tract at residues 69–99 (GIDPILPPNRQAEKDKSGETGKDKSGETGSE) is disordered. A compositionally biased stretch (basic and acidic residues) spans 79 to 94 (QAEKDKSGETGKDKSG).

It belongs to the class-II aminoacyl-tRNA synthetase family. As to quaternary structure, homodimer.

The protein resides in the cytoplasm. It carries out the reaction tRNA(His) + L-histidine + ATP = L-histidyl-tRNA(His) + AMP + diphosphate + H(+). The polypeptide is Histidine--tRNA ligase (Nostoc punctiforme (strain ATCC 29133 / PCC 73102)).